We begin with the raw amino-acid sequence, 359 residues long: Guanine nucleotide-binding protein subunit alpha-11 (359 aa).

2 S-palmitoyl cysteine lipidation sites follow: cysteine 9 and cysteine 10. In terms of domain architecture, G-alpha spans 38–359; it reads RELKLLLLGT…QLNLKEYNLV (322 aa). Residues 41–54 are G1 motif; it reads KLLLLGTGESGKST. Residues 46-53 and 180-183 contribute to the GTP site; these read GTGESGKS and LRVR. Serine 53 is a Mg(2+) binding site. The G2 motif stretch occupies residues 178 to 186; it reads DVLRVRVPT. Threonine 186 is a binding site for Mg(2+). Positions 201–210 are G3 motif; it reads FRMVDVGGQR. A G4 motif region spans residues 270–277; sequence ILFLNKKD. GTP-binding positions include 274–277 and alanine 331; that span reads NKKD. The G5 motif stretch occupies residues 329-334; the sequence is TCATDT.

It belongs to the G-alpha family. G(q) subfamily. In terms of assembly, g proteins are composed of 3 units; alpha, beta and gamma. The alpha chain contains the guanine nucleotide binding site. Interacts with RGS22. Interacts with NTSR1.

It localises to the cell membrane. It is found in the cytoplasm. The catalysed reaction is GTP + H2O = GDP + phosphate + H(+). Functionally, guanine nucleotide-binding proteins (G proteins) function as transducers downstream of G protein-coupled receptors (GPCRs) in numerous signaling cascades. The alpha chain contains the guanine nucleotide binding site and alternates between an active, GTP-bound state and an inactive, GDP-bound state. Signaling by an activated GPCR promotes GDP release and GTP binding. The alpha subunit has a low GTPase activity that converts bound GTP to GDP, thereby terminating the signal. Both GDP release and GTP hydrolysis are modulated by numerous regulatory proteins. Signaling is mediated via phospholipase C-beta-dependent inositol lipid hydrolysis for signal propagation: activates phospholipase C-beta: following GPCR activation, GNA11 activates PLC-beta (PLCB1, PLCB2, PLCB3 or PLCB4), leading to production of diacylglycerol (DAG) and inositol 1,4,5-trisphosphate (IP3). Transduces FFAR4 signaling in response to long-chain fatty acids (LCFAs). Together with GNAQ, required for heart development. In the respiratory epithelium, transmits OXGR1-dependent signals that lead to downstream intracellular Ca(2+) release and mucocilliary clearance of airborne pathogens. In Sus scrofa (Pig), this protein is Guanine nucleotide-binding protein subunit alpha-11 (GNA11).